The primary structure comprises 211 residues: Ion-translocating oxidoreductase complex subunit G (211 aa).

A helical transmembrane segment spans residues 9-29 (GLTLAIFACATTGLVALTQYL). Thr-175 is subject to FMN phosphoryl threonine.

Belongs to the RnfG family. The complex is composed of six subunits: RnfA, RnfB, RnfC, RnfD, RnfE and RnfG. Requires FMN as cofactor.

It is found in the cell inner membrane. Functionally, part of a membrane-bound complex that couples electron transfer with translocation of ions across the membrane. The sequence is that of Ion-translocating oxidoreductase complex subunit G from Vibrio parahaemolyticus serotype O3:K6 (strain RIMD 2210633).